The primary structure comprises 147 residues: Deoxyuridine 5'-triphosphate nucleotidohydrolase (147 aa).

Substrate is bound by residues Arg-63–Gly-65, Asn-76, and Thr-80–Asp-82.

The protein belongs to the dUTPase family. Mg(2+) is required as a cofactor.

It carries out the reaction dUTP + H2O = dUMP + diphosphate + H(+). The protein operates within pyrimidine metabolism; dUMP biosynthesis; dUMP from dCTP (dUTP route): step 2/2. Functionally, this enzyme is involved in nucleotide metabolism: it produces dUMP, the immediate precursor of thymidine nucleotides and it decreases the intracellular concentration of dUTP so that uracil cannot be incorporated into DNA. The sequence is that of Deoxyuridine 5'-triphosphate nucleotidohydrolase from Chlamydia abortus (strain DSM 27085 / S26/3) (Chlamydophila abortus).